Here is a 147-residue protein sequence, read N- to C-terminus: D-aminoacyl-tRNA deacylase (147 aa).

Residues glycine 137–proline 138 carry the Gly-cisPro motif, important for rejection of L-amino acids motif.

It belongs to the DTD family. As to quaternary structure, homodimer.

It is found in the cytoplasm. It carries out the reaction glycyl-tRNA(Ala) + H2O = tRNA(Ala) + glycine + H(+). The enzyme catalyses a D-aminoacyl-tRNA + H2O = a tRNA + a D-alpha-amino acid + H(+). In terms of biological role, an aminoacyl-tRNA editing enzyme that deacylates mischarged D-aminoacyl-tRNAs. Also deacylates mischarged glycyl-tRNA(Ala), protecting cells against glycine mischarging by AlaRS. Acts via tRNA-based rather than protein-based catalysis; rejects L-amino acids rather than detecting D-amino acids in the active site. By recycling D-aminoacyl-tRNA to D-amino acids and free tRNA molecules, this enzyme counteracts the toxicity associated with the formation of D-aminoacyl-tRNA entities in vivo and helps enforce protein L-homochirality. In Bacillus velezensis (strain DSM 23117 / BGSC 10A6 / LMG 26770 / FZB42) (Bacillus amyloliquefaciens subsp. plantarum), this protein is D-aminoacyl-tRNA deacylase.